The primary structure comprises 144 residues: Ribosome-binding factor A (144 aa).

Residues 120–144 (DKRRMAEAGREEDEAAPDDTTEDKA) are disordered. Residues 129–144 (REEDEAAPDDTTEDKA) are compositionally biased toward acidic residues.

The protein belongs to the RbfA family. Monomer. Binds 30S ribosomal subunits, but not 50S ribosomal subunits or 70S ribosomes.

Its subcellular location is the cytoplasm. In terms of biological role, one of several proteins that assist in the late maturation steps of the functional core of the 30S ribosomal subunit. Associates with free 30S ribosomal subunits (but not with 30S subunits that are part of 70S ribosomes or polysomes). Required for efficient processing of 16S rRNA. May interact with the 5'-terminal helix region of 16S rRNA. The sequence is that of Ribosome-binding factor A from Aeromonas salmonicida (strain A449).